The chain runs to 416 residues: Casein kinase I isoform epsilon (416 aa).

A Protein kinase domain is found at 9-277; sequence YRLGRKIGSG…YLRQLFRNLF (269 aa). ATP is bound by residues 15 to 23 and lysine 38; that span reads IGSGSFGDI. Aspartate 128 (proton acceptor) is an active-site residue. Basic and acidic residues predominate over residues 301–318; sequence PEDVDRERREHEREERMG. Residues 301–416 are disordered; the sequence is PEDVDRERRE…TSVPFDHLGK (116 aa). 2 positions are modified to phosphoserine: serine 343 and serine 354. Residues 351–365 are compositionally biased toward polar residues; sequence TPASRIQQTGNTSPR. Threonine 362 carries the post-translational modification Phosphothreonine. Position 363 is a phosphoserine (serine 363). Position 382 is an omega-N-methylarginine (arginine 382). Phosphoserine occurs at positions 389, 405, and 408.

It belongs to the protein kinase superfamily. CK1 Ser/Thr protein kinase family. Casein kinase I subfamily. As to quaternary structure, monomer. Component of the circadian core oscillator, which includes the CRY proteins, CLOCK, or NPAS2, ARTNL/BMAL1 or ARTNL2/BMAL2, CSNK1D and/or CSNK1E, TIMELESS and the PER proteins. Interacts with ANKRD6. Interacts with PER1. Interacts with DBNDD2, LRP5, LRP6 and SOCS3. Interacts with SNAI1 (via zinc fingers). Interacts with DDX3X; this interaction greatly enhances CSNK1E affinity for ATP and DVL2 phosphorylation, but inhibits DDX3X ATPase/helicase activity. In the presence of RNA, the interaction is decreased. Interacts with FAM83A, FAM83B, FAM83E and FAM83H (via DUF1669). Post-translationally, autophosphorylated. Partially dephosphorylated by PPP5C. May be dephosphorylated by PP1. Expressed in all tissues examined, including brain, heart, lung, liver, pancreas, kidney, placenta and skeletal muscle. Expressed in monocytes and lymphocytes but not in granulocytes.

Its subcellular location is the cytoplasm. It is found in the nucleus. The catalysed reaction is L-seryl-[protein] + ATP = O-phospho-L-seryl-[protein] + ADP + H(+). It catalyses the reaction L-threonyl-[protein] + ATP = O-phospho-L-threonyl-[protein] + ADP + H(+). Phosphorylation leads to a decrease in the catalytic activity. Its function is as follows. Casein kinases are operationally defined by their preferential utilization of acidic proteins such as caseins as substrates. Participates in Wnt signaling. Phosphorylates DVL1. Phosphorylates DVL2. Phosphorylates NEDD9/HEF1. Central component of the circadian clock. In balance with PP1, determines the circadian period length, through the regulation of the speed and rhythmicity of PER1 and PER2 phosphorylation. Controls PER1 and PER2 nuclear transport and degradation. Inhibits cytokine-induced granuloytic differentiation. The chain is Casein kinase I isoform epsilon (Csnk1e) from Mus musculus (Mouse).